Reading from the N-terminus, the 456-residue chain is Histidine--tRNA ligase (456 aa).

Belongs to the class-II aminoacyl-tRNA synthetase family. Homodimer.

The protein localises to the cytoplasm. It carries out the reaction tRNA(His) + L-histidine + ATP = L-histidyl-tRNA(His) + AMP + diphosphate + H(+). This is Histidine--tRNA ligase from Borrelia garinii subsp. bavariensis (strain ATCC BAA-2496 / DSM 23469 / PBi) (Borreliella bavariensis).